We begin with the raw amino-acid sequence, 144 residues long: Large ribosomal subunit protein uL13 (144 aa).

This sequence belongs to the universal ribosomal protein uL13 family. As to quaternary structure, part of the 50S ribosomal subunit.

In terms of biological role, this protein is one of the early assembly proteins of the 50S ribosomal subunit, although it is not seen to bind rRNA by itself. It is important during the early stages of 50S assembly. In Clostridium botulinum (strain Alaska E43 / Type E3), this protein is Large ribosomal subunit protein uL13.